Here is a 425-residue protein sequence, read N- to C-terminus: Trigger factor (425 aa).

Residues 163 to 248 (GDTAVIDFEG…VHEIKTKELP (86 aa)) enclose the PPIase FKBP-type domain.

Belongs to the FKBP-type PPIase family. Tig subfamily.

The protein localises to the cytoplasm. The catalysed reaction is [protein]-peptidylproline (omega=180) = [protein]-peptidylproline (omega=0). In terms of biological role, involved in protein export. Acts as a chaperone by maintaining the newly synthesized protein in an open conformation. Functions as a peptidyl-prolyl cis-trans isomerase. This is Trigger factor from Bacillus anthracis (strain A0248).